Consider the following 65-residue polypeptide: Disintegrin CC8A (65 aa).

One can recognise a Disintegrin domain in the interval 1 to 65 (MNSAHPCCDP…SDCPRNRIKK (65 aa)). 4 disulfides stabilise this stretch: Cys7–Cys30, Cys21–Cys27, Cys26–Cys51, and Cys39–Cys58. The short motif at 43-45 (RGD) is the Cell attachment site element.

This sequence belongs to the disintegrin family. Dimeric disintegrin subfamily. In terms of assembly, heterodimer with CC8B; disulfide-linked. Expressed by the venom gland.

It localises to the secreted. In terms of biological role, inhibits integrins alpha-IIb/beta-3 (ITGA2B/ITGB3), alpha-V/beta-3 (ITGAV/ITGB3), and alpha-5/beta-1 (ITGA5/ITGB1). This Cerastes cerastes (Horned desert viper) protein is Disintegrin CC8A.